The chain runs to 64 residues: Large ribosomal subunit protein bL35 (64 aa).

Basic residues predominate over residues 1–14; the sequence is MKQKTHKGTAKRIK. Positions 1–48 are disordered; the sequence is MKQKTHKGTAKRIKVTGSGKLRREQANRRHLLEGKPSKRTRRLKGTED. Positions 21–36 are enriched in basic and acidic residues; it reads LRREQANRRHLLEGKP.

The protein belongs to the bacterial ribosomal protein bL35 family.

This chain is Large ribosomal subunit protein bL35, found in Corynebacterium aurimucosum (strain ATCC 700975 / DSM 44827 / CIP 107346 / CN-1) (Corynebacterium nigricans).